The primary structure comprises 1440 residues: MEDSHELDLTYVTERIIAVSFPASCSEESYLHSLQEVTRMLKCKHGDNYLVLNLSEKRYDLTKLNPKIMDVGWPELHAPPLDKMCTICKAQESWLNNDPQHVVVIHCRGGKGRIGVVISSYMHFTNVSASADQALDRFAMKKFYDDKISALMEPSQKRYVQFLSGLLSGAMKMNTSPLFLHFVIMHGVPSFDTGGACRPFLKLYQAMQPVYTSGIYNVGSENPSRIRIAIEPAQLLKGDIMVKCYHKKFRSATRDVIFRLQFHTGAVQGYGLLFGKEELDSACKDDRFPDYGKIELVFSATPEKIQGSEHLYSDQGVTVDYNTADPLIRWDSYENMSADGEVLHTQGPVDGSLYAKVRKKSASDTGIPSSPQGMPATSSPDHGDHTLSVSSDSGHSTASARTDKTEERLTPGARRGLSPQEKAELDQLLSGFGLEDSASSHKDMTDMRSKYSGTRHVVPAQVHVNGDAALKDRETDILDDEMPHHDLHSVDSLGTLSSSEGPQSTHLGPFTCLKSSQNSLLSDGFGNGVAEDHNGVLSPDLGLGVDTLYDRERMCGGREQKPLQPLLRKPSAPTPVQAYGQSNYSTQTWVRQQQMVAAHQYSFASDGEARLGSRSTVDNTGLAQPPPHIPVTPNRGASSRVAVQRGISNGPNPPDTQQLCPGKALQPRFQDDRVTNGVHQEPNTGSSPGSPTLDIDQSIEQLNRLILELDPTFEPIPTHLNALGISAVCPDGVGSGLRCSGRLDSVDGPGRSPGRQGDDPIGGRLRKLSIGQYDNDAASQVTFSKCGWGKAGVDPAPSLGSFSSPEDIKETVITAYPSDLNMIDGRIPNSKESSMCLTPSFPVSPETPYVKTSPRYPPFSPPEPQLSSPASLHKGREPRGCPEIISHTVGMSESPVGPKPTMLRADMPATPNFQQVFASSCTVSSNGPGQRRESPPSAERQWVESSPKSTLTLLGNSHPSESPLGTHEFCSSGKDSPGLPCFQSSELQASFHSHELSMSEPQGALPPAGSQTFLGFNTVTTATSVLPPGEDAGTLLVNSHGTSPAPGTPLLTTGAADNGFLPHNFLTVSPGASSHHSPGLQNQNVSLPGQPPLPEKKRASEGDRSLGSVSPSSSGFSSPHSGSTMSIPFPNVLPDFCKPSEVASPLPDSPNDKLVIVKFVQDTSKFWYKADISREQAIAMLKDKAPGSFIVRDSHSFRGAYGLAMKVATPPPSVLHLNKKAGDLSNELVRHFLIECTPKGVRLKGCSNEPYFGSLTALVCQHSITPLALPCKLLIPERDPLEEIAENSPQTAANSAAELLKQGAACNVWYLNSVEMESLTGHQAVQKALSMTLVQEPPPVSTVVHFKVSAQGITLTDNQRKLFFRRHYPVSSVIFCALDPQDRKWIKDGPSSKVFGFVARKQGSATDNVCHLFAEHDPEQPASAIVNFVSKVMIGSPKKI.

Residues 1–170 (MEDSHELDLT…QFLSGLLSGA (170 aa)) enclose the Phosphatase tensin-type domain. A C2 tensin-type domain is found at 175–301 (TSPLFLHFVI…GKIELVFSAT (127 aa)). Threonine 323 carries the post-translational modification Phosphothreonine. Residues serine 332, serine 361, and serine 370 each carry the phosphoserine modification. The disordered stretch occupies residues 358 to 421 (RKKSASDTGI…GARRGLSPQE (64 aa)). 2 stretches are compositionally biased toward polar residues: residues 363 to 380 (SDTG…TSSP) and 387 to 400 (LSVS…TASA). Phosphoserine occurs at positions 440, 516, and 571. 3 disordered regions span residues 607 to 662 (GEAR…LCPG), 675 to 694 (TNGV…PTLD), and 740 to 762 (SGRL…DPIG). Residues 613 to 622 (SRSTVDNTGL) are compositionally biased toward polar residues. Threonine 632 carries the phosphothreonine modification. Polar residues-rich tracts occupy residues 646 to 659 (GISN…TQQL) and 677 to 690 (GVHQ…SPGS). Phosphoserine occurs at positions 648, 687, and 690. Phosphoserine is present on serine 769. Residue tyrosine 773 is modified to Phosphotyrosine. Residues serine 804, serine 860, serine 894, and serine 960 each carry the phosphoserine modification. Disordered stretches follow at residues 846-881 (ETPY…PRGC), 887-906 (HTVG…LRAD), 920-975 (SCTV…SGKD), and 1067-1123 (TVSP…HSGS). The span at 855-864 (RYPPFSPPEP) shows a compositional bias: pro residues. 2 stretches are compositionally biased toward polar residues: residues 943–960 (VESS…SHPS) and 1067–1087 (TVSP…NVSL). A compositionally biased stretch (basic and acidic residues) spans 1094–1104 (PEKKRASEGDR). The segment covering 1105-1123 (SLGSVSPSSSGFSSPHSGS) has biased composition (low complexity). Phosphoserine occurs at positions 1144 and 1149. One can recognise an SH2 domain in the interval 1167-1277 (WYKADISREQ…ALPCKLLIPE (111 aa)). A phosphoserine mark is found at serine 1288 and serine 1436. In terms of domain architecture, PTB spans 1305-1439 (ACNVWYLNSV…SKVMIGSPKK (135 aa)).

It belongs to the PTEN phosphatase protein family. In terms of assembly, interacts with EGFR; EGF promotes the interaction with EGFR. Interacts with PTK2/FAK1 and BCAR1. Tyrosine phosphorylation is critical for these interactions. Interacts with Rho GTPase-activating protein DLC1 and with the regulatory p85 subunit of the PI3K kinase complex; in resting cells, interacts (via C2 tensin-type domain) with DLC1 but, following growth factor stimulation, TNS3 is phosphorylated which leads to weakened interaction with DLC1 and enhanced interaction (via C2 tensin-type domain) with p85 while DLC1 interaction with PTEN increases. Interacts (when phosphorylated on the SH2 domain) with integrins ITGB1, ITGB3 and ITGB5 and with scaffolding protein PEAK1 (phosphorylated on 'Tyr-632'); these interactions mediate the association of PEAK1 with ITGB1, ITGB3 and ITGB5. Interacts (via N-terminus) with DOCK5 (via N-terminus); the interaction increases DOCK5 guanine nucleotide exchange activity towards Rac. Interacts with receptor tyrosine kinase MET. In terms of processing, phosphorylated on Ser/Thr and Tyr residues. Phosphorylated on Thr-323 in the C2-type tensin domain following EGF stimulation which changes its binding preference from DLC1 to the p85 regulatory subunit of the PI3K kinase complex. EGF induces tyrosine phosphorylation in a time- and dose-dependent manner. Phosphorylation of the SH2 domain enhances interaction with PEAK1. In terms of tissue distribution, expressed in brain, heart, lung, liver, spleen, kidney, stomach, small intestine, skeletal muscle, skin, thymus, testis, uterus, placenta, aorta and trachea.

Its subcellular location is the cell junction. The protein resides in the focal adhesion. It is found in the cell projection. It localises to the podosome. Functionally, may act as a protein phosphatase and/or a lipid phosphatase. Involved in the dissociation of the integrin-tensin-actin complex. EGF activates TNS4 and down-regulates TNS3 which results in capping the tail of ITGB1. Increases DOCK5 guanine nucleotide exchange activity towards Rac and plays a role in osteoclast podosome organization. Enhances RHOA activation in the presence of DLC1. Required for growth factor-induced epithelial cell migration; growth factor stimulation induces TNS3 phosphorylation which changes its binding preference from DLC1 to the p85 regulatory subunit of the PI3K kinase complex, displacing PI3K inhibitor PTEN and resulting in translocation of the TNS3-p85 complex to the leading edge of migrating cells to promote RAC1 activation. Meanwhile, PTEN switches binding preference from p85 to DLC1 and the PTEN-DLC1 complex translocates to the posterior of migrating cells to activate RHOA. Acts as an adapter protein by bridging the association of scaffolding protein PEAK1 with integrins ITGB1, ITGB3 and ITGB5 which contributes to the promotion of cell migration. Controls tonsil-derived mesenchymal stem cell proliferation and differentiation by regulating the activity of integrin ITGB1. The sequence is that of Tensin-3 (Tns3) from Mus musculus (Mouse).